A 427-amino-acid polypeptide reads, in one-letter code: Glutamate-1-semialdehyde 2,1-aminomutase (427 aa).

Lys265 carries the N6-(pyridoxal phosphate)lysine modification.

This sequence belongs to the class-III pyridoxal-phosphate-dependent aminotransferase family. HemL subfamily. In terms of assembly, homodimer. Pyridoxal 5'-phosphate is required as a cofactor.

The protein resides in the cytoplasm. It carries out the reaction (S)-4-amino-5-oxopentanoate = 5-aminolevulinate. It participates in porphyrin-containing compound metabolism; protoporphyrin-IX biosynthesis; 5-aminolevulinate from L-glutamyl-tRNA(Glu): step 2/2. This Burkholderia pseudomallei (strain 668) protein is Glutamate-1-semialdehyde 2,1-aminomutase.